A 201-amino-acid chain; its full sequence is Peptide deformylase 2 (201 aa).

Fe cation is bound by residues Cys121 and His163. Glu164 is a catalytic residue. A Fe cation-binding site is contributed by His167.

It belongs to the polypeptide deformylase family. Requires Fe(2+) as cofactor.

It catalyses the reaction N-terminal N-formyl-L-methionyl-[peptide] + H2O = N-terminal L-methionyl-[peptide] + formate. Its function is as follows. Removes the formyl group from the N-terminal Met of newly synthesized proteins. Requires at least a dipeptide for an efficient rate of reaction. N-terminal L-methionine is a prerequisite for activity but the enzyme has broad specificity at other positions. The chain is Peptide deformylase 2 from Prochlorococcus marinus (strain MIT 9313).